The following is a 477-amino-acid chain: Myosin-binding protein H (477 aa).

The interval 1-73 (MMEKNTSEGP…APPSEDVPSA (73 aa)) is disordered. A phosphothreonine mark is found at threonine 6 and threonine 26. In terms of domain architecture, Fibronectin type-III 1 spans 73–168 (APLLLTLDDV…LDQPIHIREN (96 aa)). One can recognise an Ig-like C2-type 1 domain in the interval 172–260 (PKIRVPRHLR…EDLEAKAVID (89 aa)). Positions 269–364 (PPSSIRLLDV…TKELAHIQKA (96 aa)) constitute a Fibronectin type-III 2 domain. The region spanning 382 to 466 (PSFTQPLADH…INVLGEASVD (85 aa)) is the Ig-like C2-type 2 domain.

It belongs to the immunoglobulin superfamily. MyBP family. Mainly expressed in the skeletal muscle. Slightly expressed in the left atrium and arteria mammaria interna.

Binds to myosin; probably involved in interaction with thick myofilaments in the A-band. In Homo sapiens (Human), this protein is Myosin-binding protein H (MYBPH).